A 238-amino-acid chain; its full sequence is Probable septum site-determining protein MinC (238 aa).

It belongs to the MinC family. In terms of assembly, interacts with MinD and FtsZ.

In terms of biological role, cell division inhibitor that blocks the formation of polar Z ring septums. Rapidly oscillates between the poles of the cell to destabilize FtsZ filaments that have formed before they mature into polar Z rings. Prevents FtsZ polymerization. The protein is Probable septum site-determining protein MinC of Blochmanniella floridana.